Reading from the N-terminus, the 252-residue chain is Fatty acid elongase 4 (252 aa).

A helical membrane pass occupies residues 25-45 (LVSWHALVLGHLLYLFVVFVM). A glycan (N-linked (GlcNAc...) asparagine) is linked at N56. A helical transmembrane segment spans residues 60–80 (VLVVYNVLQICLSAAMAINLS). A glycan (N-linked (GlcNAc...) asparagine) is linked at N89. The next 5 helical transmembrane spans lie at 100-120 (FWMF…VFIL), 127-147 (QLSF…GILL), 150-170 (GLAN…HFLM), 187-207 (FLLT…AILV), and 214-234 (FTLG…VLFL). The HxxHH motif motif lies at 132-136 (HVYHH). The active-site Nucleophile is the H135.

This sequence belongs to the ELO family.

It is found in the membrane. It carries out the reaction (5Z,8Z,11Z,14Z)-eicosatetraenoyl-CoA + malonyl-CoA + H(+) = (7Z,10Z,13Z,16Z)-3-oxodocosatetraenoyl-CoA + CO2 + CoA. The protein operates within lipid metabolism; fatty acid biosynthesis. Functionally, involved in the synthesis of fatty acids. Elongates arachidonate and other C20 polyunsaturated fatty acids (PUFAs) with a preference for n-6 PUFAs. Not involved in fatty acid synthesis up to C18. This chain is Fatty acid elongase 4, found in Trypanosoma brucei brucei (strain 927/4 GUTat10.1).